We begin with the raw amino-acid sequence, 469 residues long: Phosphoenolpyruvate carboxylase (469 aa).

The protein belongs to the PEPCase type 2 family. Homotetramer. Mg(2+) serves as cofactor.

It carries out the reaction oxaloacetate + phosphate = phosphoenolpyruvate + hydrogencarbonate. In terms of biological role, catalyzes the irreversible beta-carboxylation of phosphoenolpyruvate (PEP) to form oxaloacetate (OAA), a four-carbon dicarboxylic acid source for the tricarboxylic acid cycle. This Pyrococcus horikoshii (strain ATCC 700860 / DSM 12428 / JCM 9974 / NBRC 100139 / OT-3) protein is Phosphoenolpyruvate carboxylase.